A 496-amino-acid chain; its full sequence is tRNA modification GTPase mss1, mitochondrial (496 aa).

The transit peptide at 1–19 (MRILNRVFLNTFQACFRRF) directs the protein to the mitochondrion. In terms of domain architecture, TrmE-type G spans 239-416 (GINVAILGPS…FLQALSSTFE (178 aa)). GTP-binding positions include 246-253 (GPSNAGKS), 293-297 (DTAGL), and 363-366 (NKVD).

The protein belongs to the TRAFAC class TrmE-Era-EngA-EngB-Septin-like GTPase superfamily. TrmE GTPase family.

The protein localises to the mitochondrion. Functionally, GTPase involved in the 5-carboxymethylaminomethyl modification (mnm(5)s(2)U34) of the wobble uridine base in mitochondrial tRNAs. The protein is tRNA modification GTPase mss1, mitochondrial (mss1) of Schizosaccharomyces pombe (strain 972 / ATCC 24843) (Fission yeast).